A 109-amino-acid polypeptide reads, in one-letter code: DNA-binding protein Mpal_0536 (109 aa).

The interval 14–35 (MAQLQSQQMDQQQMDEEKQRAK) is disordered. Positions 16 to 25 (QLQSQQMDQQ) are enriched in low complexity.

The protein belongs to the PDCD5 family.

The polypeptide is DNA-binding protein Mpal_0536 (Methanosphaerula palustris (strain ATCC BAA-1556 / DSM 19958 / E1-9c)).